Reading from the N-terminus, the 120-residue chain is MLIGILSKKYVKEILELLNEKGELHFSQIHKEIPTHMSSLNRTLNELVKLGLISKRKEDNKQALPKTYYKLTPLGKKALLLYEVEKIIENSKNNQNIIIQIINGKNHNIINAKIVNIHNK.

This sequence to M.jannaschii MJ0361.

This is an uncharacterized protein from Methanocaldococcus jannaschii (strain ATCC 43067 / DSM 2661 / JAL-1 / JCM 10045 / NBRC 100440) (Methanococcus jannaschii).